Consider the following 348-residue polypeptide: Fructose-1,6-bisphosphatase class 1 (348 aa).

Residues glutamate 107, aspartate 129, isoleucine 131, and aspartate 132 each coordinate Mg(2+). Residues aspartate 132 to serine 135, asparagine 224, tyrosine 252, and lysine 282 each bind substrate. Glutamate 288 is a Mg(2+) binding site.

It belongs to the FBPase class 1 family. In terms of assembly, homotetramer. It depends on Mg(2+) as a cofactor.

It localises to the cytoplasm. It catalyses the reaction beta-D-fructose 1,6-bisphosphate + H2O = beta-D-fructose 6-phosphate + phosphate. It functions in the pathway carbohydrate biosynthesis; Calvin cycle. The chain is Fructose-1,6-bisphosphatase class 1 from Microcystis aeruginosa (strain NIES-843 / IAM M-2473).